The primary structure comprises 327 residues: Zinc transport protein ZntB (327 aa).

At 1–273 (MEAIKGSDVN…ARRTYTMSLM (273 aa)) the chain is on the cytoplasmic side. Residues 274 to 294 (AMVFLPSTFLTGLFGVNLGGI) traverse the membrane as a helical segment. Over 295–300 (PGGGWQ) the chain is Periplasmic. Residues 301 to 321 (FGFSIFCILLVVLIGGVALWL) traverse the membrane as a helical segment. Residues 322–327 (HRSKWL) are Cytoplasmic-facing.

The protein belongs to the CorA metal ion transporter (MIT) (TC 1.A.35) family.

Its subcellular location is the cell inner membrane. It carries out the reaction Zn(2+)(out) + H(+)(out) = Zn(2+)(in) + H(+)(in). Its function is as follows. Zinc transporter. Acts as a Zn(2+):proton symporter, which likely mediates zinc ion uptake. In Escherichia coli O139:H28 (strain E24377A / ETEC), this protein is Zinc transport protein ZntB.